Here is a 325-residue protein sequence, read N- to C-terminus: MQTSLLKPKIIAVESLGENHARVVMEPFERGYGHTLGNALRRVLLSSMVGYAPTEVTIAGVVHEYSTLDGVQEDVVNLLLNLKGVVFKLHNRDEVTVTLRKEGEGVVTAGDIELAHDCEVINPNHVIAHLSKGGKLDVQIKIEKGRGYVPGNVRRYGEDTAKIIGRIVLDASFSPVRRVSYAVESARVEQRTDLDKLVMNIETSGVITPEEAIRQSARILVDQLSVFAALEGTETAAEAPSRAPQIDPILLRPVDDLELTVRSANCLKAENIYYIGDLIQRTENELLKTPNLGRKSLNEIKEVLASRGLTLGMKLENWPPAGLDK.

The alpha N-terminal domain (alpha-NTD) stretch occupies residues 1–231 (MQTSLLKPKI…DQLSVFAALE (231 aa)). The alpha C-terminal domain (alpha-CTD) stretch occupies residues 246-325 (IDPILLRPVD…ENWPPAGLDK (80 aa)).

This sequence belongs to the RNA polymerase alpha chain family. In terms of assembly, homodimer. The RNAP catalytic core consists of 2 alpha, 1 beta, 1 beta' and 1 omega subunit. When a sigma factor is associated with the core the holoenzyme is formed, which can initiate transcription.

The enzyme catalyses RNA(n) + a ribonucleoside 5'-triphosphate = RNA(n+1) + diphosphate. Its function is as follows. DNA-dependent RNA polymerase catalyzes the transcription of DNA into RNA using the four ribonucleoside triphosphates as substrates. In Burkholderia orbicola (strain MC0-3), this protein is DNA-directed RNA polymerase subunit alpha.